Reading from the N-terminus, the 224-residue chain is Proteasome subunit beta (224 aa).

Positions 1 to 6 are cleaved as a propeptide — removed in mature form; by autocatalysis; it reads MDVMKG. Threonine 7 serves as the catalytic Nucleophile.

The protein belongs to the peptidase T1B family. In terms of assembly, the 20S proteasome core is composed of 14 alpha and 14 beta subunits that assemble into four stacked heptameric rings, resulting in a barrel-shaped structure. The two inner rings, each composed of seven catalytic beta subunits, are sandwiched by two outer rings, each composed of seven alpha subunits. The catalytic chamber with the active sites is on the inside of the barrel. Has a gated structure, the ends of the cylinder being occluded by the N-termini of the alpha-subunits. Is capped at one or both ends by the proteasome regulatory ATPase, PAN.

Its subcellular location is the cytoplasm. The catalysed reaction is Cleavage of peptide bonds with very broad specificity.. With respect to regulation, the formation of the proteasomal ATPase PAN-20S proteasome complex, via the docking of the C-termini of PAN into the intersubunit pockets in the alpha-rings, triggers opening of the gate for substrate entry. Interconversion between the open-gate and close-gate conformations leads to a dynamic regulation of the 20S proteasome proteolysis activity. Its function is as follows. Component of the proteasome core, a large protease complex with broad specificity involved in protein degradation. The polypeptide is Proteasome subunit beta (Methanocaldococcus fervens (strain DSM 4213 / JCM 15782 / AG86) (Methanococcus fervens)).